The primary structure comprises 121 residues: Outer membrane lipoprotein BBA14 (121 aa).

The first 19 residues, 1 to 19 (MQIKNFPFLFLLNSLIIFS), serve as a signal peptide directing secretion. A lipid anchor (N-palmitoyl cysteine) is attached at Cys-20. Residue Cys-20 is the site of S-diacylglycerol cysteine attachment.

It is found in the cell outer membrane. In terms of biological role, outer membrane lipoprotein that could act as a component of a potential toxin-antitoxin system in B.burgdorferi which could serve as a plasmid stabilization mechanism in a growing bacterial population. In Borreliella burgdorferi (strain ATCC 35210 / DSM 4680 / CIP 102532 / B31) (Borrelia burgdorferi), this protein is Outer membrane lipoprotein BBA14.